The sequence spans 148 residues: Large ribosomal subunit protein bL9 (148 aa).

This sequence belongs to the bacterial ribosomal protein bL9 family.

Binds to the 23S rRNA. The polypeptide is Large ribosomal subunit protein bL9 (Salinispora tropica (strain ATCC BAA-916 / DSM 44818 / JCM 13857 / NBRC 105044 / CNB-440)).